Consider the following 200-residue polypeptide: MDPSAESIAGVDEVGRGCWFGPVFAGAVVLTEVAAVELLAEGLTDSKALTVRRRARLVPLIEDAATAWALGQASAREIDALGIRSATELSMLRALQRLPTPLELVLVDGVLPLRLWMGPQRTVVRGDSKCAAIAAASVLAKQARDGLIKRLASRFYGYGLERHVGYGTAIHRRALLDLGPTALHRRSFLTKLFAVHGSLT.

One can recognise an RNase H type-2 domain in the interval 6-200 (ESIAGVDEVG…KLFAVHGSLT (195 aa)). A divalent metal cation contacts are provided by Asp-12, Glu-13, and Asp-108.

This sequence belongs to the RNase HII family. It depends on Mn(2+) as a cofactor. Mg(2+) is required as a cofactor.

It is found in the cytoplasm. It catalyses the reaction Endonucleolytic cleavage to 5'-phosphomonoester.. In terms of biological role, endonuclease that specifically degrades the RNA of RNA-DNA hybrids. This Prochlorococcus marinus (strain MIT 9303) protein is Ribonuclease HII.